The chain runs to 347 residues: NADH-quinone oxidoreductase subunit H (347 aa).

Transmembrane regions (helical) follow at residues 21–41 (VAGILLIALPLMLAVAMIIYA), 87–107 (GLFLIAPIITFTVALLAWAVI), 118–138 (INVGLLYILAISSLGVYGVIL), 157–177 (AQMISYEVSIGFILIGVVLFA), 195–215 (GIVNAFGFNLLLFPLAVMFLI), 258–278 (NVLLMCTLNAVLFWGGWLPPI), 283–303 (LYAVPGIIWLFAKILFFFFVF), and 323–343 (WKIFLPISLIWIFLISGYLML).

Belongs to the complex I subunit 1 family. In terms of assembly, NDH-1 is composed of 14 different subunits. Subunits NuoA, H, J, K, L, M, N constitute the membrane sector of the complex.

The protein localises to the cell inner membrane. The catalysed reaction is a quinone + NADH + 5 H(+)(in) = a quinol + NAD(+) + 4 H(+)(out). Its function is as follows. NDH-1 shuttles electrons from NADH, via FMN and iron-sulfur (Fe-S) centers, to quinones in the respiratory chain. The immediate electron acceptor for the enzyme in this species is believed to be ubiquinone. Couples the redox reaction to proton translocation (for every two electrons transferred, four hydrogen ions are translocated across the cytoplasmic membrane), and thus conserves the redox energy in a proton gradient. This subunit may bind ubiquinone. In Sphingopyxis alaskensis (strain DSM 13593 / LMG 18877 / RB2256) (Sphingomonas alaskensis), this protein is NADH-quinone oxidoreductase subunit H.